Reading from the N-terminus, the 184-residue chain is Ribosome-recycling factor (184 aa).

The segment at 141–164 (DEKNGDITEDDLRSQTEDVQKATD) is disordered.

Belongs to the RRF family.

It is found in the cytoplasm. Its function is as follows. Responsible for the release of ribosomes from messenger RNA at the termination of protein biosynthesis. May increase the efficiency of translation by recycling ribosomes from one round of translation to another. This chain is Ribosome-recycling factor, found in Staphylococcus haemolyticus (strain JCSC1435).